The chain runs to 107 residues: Death-associated protein-like 1 (107 aa).

The segment at 1–23 is disordered; the sequence is MANEVQDLLSPRKGGHPPAVKAG.

Expressed in hair follicle (at protein level).

In terms of biological role, may play a role in the early stages of epithelial differentiation or in apoptosis. In Homo sapiens (Human), this protein is Death-associated protein-like 1 (DAPL1).